We begin with the raw amino-acid sequence, 1256 residues long: MAKKFNYKLPSMVALTLVGSAVTAHQVQAAETTQDQTTNKNVLDSNKVKATTEQAKAEVKNPTQNISGTQVYQDPAIVQPKTANNKTGNAQVSQKVDTAQVNGDTRANQSATTNNTQPVAKSTSTTAPKTNTNVTNAGYSLVDDEDDNSENQINPELIKSAAKPAALETQYKAAAPKAATTSAPKAKTEATPKVTTFSASAQPRSVAATPKTSLPKYKPQVNSSINDYIRKNNLKAPKIEEDYTSYFPKYAYRNGVGRPEGIVVHDTANDRSTINGEISYMKNNYQNAFVHAFVDGDRIIETAPTDYLSWGVGAVGNPRFINVEIVHTHDYASFARSMNNYADYAATQLQYYGLKPDSAEYDGNGTVWTHYAVSKYLGGTDHADPHGYLRSHNYSYDQLYDLINEKYLIKMGKVAPWGTQSTTTPTTPSKPTTPSKPSTGKLTVAANNGVAQIKPTNSGLYTTVYDKTGKATNEVQKTFAVSKTATLGNQKFYLVQDYNSGNKFGWVKEGDVVYNTAKSPVNVNQSYSIKPGTKLYTVPWGTSKQVAGSVSGSGNQTFKASKQQQIDKSIYLYGSVNGKSGWVSKAYLVDTAKPTPTPTPKPSTPTTNNKLTVSSLNGVAQINAKNNGLFTTVYDKTGKPTKEVQKTFAVTKEASLGGNKFYLVKDYNSPTLIGWVKQGDVIYNNAKSPVNVMQTYTVKPGTKLYSVPWGTYKQEAGAVSGTGNQTFKATKQQQIDKSIYLFGTVNGKSGWVSKAYLAVPAAPKKAVAQPKTAVKAYTVTKPQTTQTVSKIAQVKPNNTGIRASVYEKTAKNGAKYADRTFYVTKERAHGNETYVLLNNTSHNIPLGWFNVKDLNVQNLGKEVKTTQKYTVNKSNNGLSMVPWGTKNQVILTGNNIAQGTFNATKQVSVGKDVYLYGTINNRTGWVNAKDLTAPTAVKPTTSAAKDYNYTYVIKNGNGYYYVTPNSDTAKYSLKAFNEQPFAVVKEQVINGQTWYYGKLSNGKLAWIKSTDLAKELIKYNQTGMTLNQVAQIQAGLQYKPQVQRVPGKWTDANFNDVKHAMDTKRLAQDPALKYQFLRLDQPQNISIDKINQFLKGKGVLENQGAAFNKAAQMYGINEVYLISHALLETGNGTSQLAKGADVVNNKVVTNSNTKYHNVFGIAAYDNDPLREGIKYAKQAGWDTVSKAIVGGAKFIGNSYVKAGQNTLYKMRWNPAHPGTHQYATDIDWANINAKIIKGYYDKIGEVGKYFDIPQYK.

The first 29 residues, 1-29, serve as a signal peptide directing secretion; the sequence is MAKKFNYKLPSMVALTLVGSAVTAHQVQA. The segment covering 103–138 has biased composition (polar residues); that stretch reads GDTRANQSATTNNTQPVAKSTSTTAPKTNTNVTNAG. Disordered stretches follow at residues 103–151, 173–219, and 419–440; these read GDTR…NSEN, AAAP…KYKP, and TQST…PSTG. Low complexity-rich tracts occupy residues 173–196 and 421–439; these read AAAP…KVTT and STTT…KPST. An N-acetylmuramoyl-L-alanine amidase region spans residues 199–775; that stretch reads ASAQPRSVAA…AVAQPKTAVK (577 aa). 7 consecutive GW domains span residues 443-517, 519-593, 612-686, 688-762, 784-859, 861-936, and 943-1017; these read TVAA…YNTA, SPVN…DTAK, TVSS…YNNA, SPVN…VPAA, TTQT…VQNL, KEVK…APTA, and AAKD…KELI. The endo-beta-N-acetylglucosaminidase stretch occupies residues 776–1256; the sequence is AYTVTKPQTT…GKYFDIPQYK (481 aa).

This sequence in the N-terminal section; belongs to the N-acetylmuramoyl-L-alanine amidase 2 family. It in the C-terminal section; belongs to the glycosyl hydrolase 73 family. In terms of assembly, oligomer; forms a ring structure at the cell surface which is important for efficient partitioning of daughter cells after cell division. In terms of processing, undergoes proteolytic processing to generate the two extracellular lytic enzymes, probably at the septal region on the cell surface.

The protein resides in the secreted. The enzyme catalyses Hydrolyzes the link between N-acetylmuramoyl residues and L-amino acid residues in certain cell-wall glycopeptides.. It carries out the reaction an N(4)-(oligosaccharide-(1-&gt;3)-[oligosaccharide-(1-&gt;6)]-beta-D-Man-(1-&gt;4)-beta-D-GlcNAc-(1-&gt;4)-alpha-D-GlcNAc)-L-asparaginyl-[protein] + H2O = an oligosaccharide-(1-&gt;3)-[oligosaccharide-(1-&gt;6)]-beta-D-Man-(1-&gt;4)-D-GlcNAc + N(4)-(N-acetyl-beta-D-glucosaminyl)-L-asparaginyl-[protein]. Functionally, endohydrolysis of the di-N-acetylchitobiosyl unit in high-mannose glycopeptides and glycoproteins containing the -[(Man)5(GlcNAc)2]-Asn structure. One N-acetyl-D-glucosamine residue remains attached to the protein; the rest of the oligosaccharide is released intact. Cleaves the peptidoglycan connecting the daughter cells at the end of the cell division cycle, resulting in the separation of the two newly divided cells. Acts as an autolysin in penicillin-induced lysis. This Staphylococcus aureus (strain MW2) protein is Bifunctional autolysin (atl).